The following is a 96-amino-acid chain: Co-chaperonin GroES (96 aa).

It belongs to the GroES chaperonin family. As to quaternary structure, heptamer of 7 subunits arranged in a ring. Interacts with the chaperonin GroEL.

Its subcellular location is the cytoplasm. In terms of biological role, together with the chaperonin GroEL, plays an essential role in assisting protein folding. The GroEL-GroES system forms a nano-cage that allows encapsulation of the non-native substrate proteins and provides a physical environment optimized to promote and accelerate protein folding. GroES binds to the apical surface of the GroEL ring, thereby capping the opening of the GroEL channel. This chain is Co-chaperonin GroES, found in Acinetobacter baumannii (strain AB307-0294).